The primary structure comprises 493 residues: Glycerol kinase (493 aa).

T11 serves as a coordination point for ADP. Residues T11, T12, and S13 each contribute to the ATP site. T11 contributes to the sn-glycerol 3-phosphate binding site. R15 is a binding site for ADP. The sn-glycerol 3-phosphate site is built by R80, E81, Y132, and D241. Glycerol is bound by residues R80, E81, Y132, D241, and Q242. ADP contacts are provided by T263 and G306. ATP-binding residues include T263, G306, Q310, and G408. ADP is bound at residue G408.

The protein belongs to the FGGY kinase family.

It catalyses the reaction glycerol + ATP = sn-glycerol 3-phosphate + ADP + H(+). It participates in polyol metabolism; glycerol degradation via glycerol kinase pathway; sn-glycerol 3-phosphate from glycerol: step 1/1. Inhibited by fructose 1,6-bisphosphate (FBP). Functionally, key enzyme in the regulation of glycerol uptake and metabolism. Catalyzes the phosphorylation of glycerol to yield sn-glycerol 3-phosphate. This chain is Glycerol kinase, found in Cereibacter sphaeroides (strain ATCC 17025 / ATH 2.4.3) (Rhodobacter sphaeroides).